The primary structure comprises 279 residues: 3-methyl-2-oxobutanoate hydroxymethyltransferase (279 aa).

Mg(2+) is bound by residues aspartate 43 and aspartate 82. 3-methyl-2-oxobutanoate-binding positions include 43-44, aspartate 82, and lysine 112; that span reads DS. Glutamate 114 contacts Mg(2+). Glutamate 181 serves as the catalytic Proton acceptor.

The protein belongs to the PanB family. Homodecamer; pentamer of dimers. Mg(2+) serves as cofactor.

It localises to the cytoplasm. The enzyme catalyses 3-methyl-2-oxobutanoate + (6R)-5,10-methylene-5,6,7,8-tetrahydrofolate + H2O = 2-dehydropantoate + (6S)-5,6,7,8-tetrahydrofolate. The protein operates within cofactor biosynthesis; (R)-pantothenate biosynthesis; (R)-pantoate from 3-methyl-2-oxobutanoate: step 1/2. In terms of biological role, catalyzes the reversible reaction in which hydroxymethyl group from 5,10-methylenetetrahydrofolate is transferred onto alpha-ketoisovalerate to form ketopantoate. The chain is 3-methyl-2-oxobutanoate hydroxymethyltransferase from Bacillus anthracis (strain A0248).